Reading from the N-terminus, the 612-residue chain is MPVRQLPEQIVNRIAAGEVVERPASAVKELVENAIDAGGTRIDIFTEGGGRRRIVITDDGSGMTQGDLALAVERHATSKLDDEDLLRIRTLGFRGEALPSISSVAKLAITTRHAAEPHAWAVEVDAGAKSAIAPAALQRGTRVEVSDLFYATPARLKFLKTDRTEAEAIREVVRRLAMARPDIAFTLAGEERAPVTWAAALPGAPGRLTRLGDILGSDFRTHAIEVGSEREGVSVEGFAAAPSLTRANALGQYLFVNGRPVRDKLILGAVRAAYADYLPRDRHPIVALFVTLDPQEVDANVHPAKTEVRFRNAGLVRALIVHALKDGLAREGRRTAANTNGAAITTAFRTEGFSREGFARESLPRGGYDWRSSPAAPWPPQAAAQAPAMGFDESAQAAFDAGAPSADTRGNEAPLGDALGRPLGAARTQIHENYIVAQTNDGLILVDQHAAHERIVYERLKASLTKNGVARQMLLIPEIVEMDEASVEKLLARASELEKYGLSIESFGPGAVAVRETPALLGKANAASLLRDLAEHMAEWDEALPLERRLMHVAATMACHGSVRSGRILKVEEMNALLREMEATPNSGQCNHGRPTYVELKLADIEKLFGRR.

It belongs to the DNA mismatch repair MutL/HexB family.

Functionally, this protein is involved in the repair of mismatches in DNA. It is required for dam-dependent methyl-directed DNA mismatch repair. May act as a 'molecular matchmaker', a protein that promotes the formation of a stable complex between two or more DNA-binding proteins in an ATP-dependent manner without itself being part of a final effector complex. The polypeptide is DNA mismatch repair protein MutL (Afipia carboxidovorans (strain ATCC 49405 / DSM 1227 / KCTC 32145 / OM5) (Oligotropha carboxidovorans)).